We begin with the raw amino-acid sequence, 677 residues long: MSDRAEDPAARAAQLREQLEYHAHRYYVLDAPEIPDAEYDRLFTELQALEAAHPGLRTPDSPTQRVIGAVLEGLSAVRHAVPMLSIKTETDTTPTGALKFDAAVRNALKLPPDAPPLRYAAELKFDGLAINLRYQAGRLVQAATRGDGETGEDVTHTVGTIESVPKQLRGITAPVLEVRGEVFMRRDDFEALNERQREAGLKTFVNPRNAAAGIVRQLDASIARQRPLSFFAYGLGDVQGWDVPPTHAGLLDALAALGLPVDAHRTVVEGGEALAAFHAGIAAERDALPFDIDGVVYKVDERALQQQLGFKSREPRWAVAHKYPAQEQSTQLAGIEIQVGRTGKLTPVAKLQPVFVGGTTVSNATLHNRFELRRKGIRIGDTVIVRRAGDVIPEVVGRVPVPRTAYIPNFRMPRACPVCGSQALRERGSVDYRCSGGLFCAAQRKQALLHFAGRRMMDIEGLGDKLVEQLVDGGIIRTLPELYRLGVAKLVALERMGDKSAANLVAALEASKATTLARFLFSLGIRHIGEATAKDLARHFGALDRVMDASVEQLLEVNDVGPVVAQSLRTFFDQPHNREVVEQLRAAGVHWDEHSGEADLTPRPLAGKTFVLTGTLPSLGREAAKELIEAAGGKVAGSVSKKTDYVVAGEEAGSKLEKAQALGVAVIDEAALRALLD.

Residues 36 to 40, 85 to 86, and Glu-122 contribute to the NAD(+) site; these read DAEYD and SI. The N6-AMP-lysine intermediate role is filled by Lys-124. Arg-145, Glu-181, Lys-298, and Lys-322 together coordinate NAD(+). Positions 416, 419, 434, and 440 each coordinate Zn(2+). Positions 600–677 constitute a BRCT domain; sequence LTPRPLAGKT…DEAALRALLD (78 aa).

The protein belongs to the NAD-dependent DNA ligase family. LigA subfamily. The cofactor is Mg(2+). It depends on Mn(2+) as a cofactor.

It carries out the reaction NAD(+) + (deoxyribonucleotide)n-3'-hydroxyl + 5'-phospho-(deoxyribonucleotide)m = (deoxyribonucleotide)n+m + AMP + beta-nicotinamide D-nucleotide.. DNA ligase that catalyzes the formation of phosphodiester linkages between 5'-phosphoryl and 3'-hydroxyl groups in double-stranded DNA using NAD as a coenzyme and as the energy source for the reaction. It is essential for DNA replication and repair of damaged DNA. In Methylibium petroleiphilum (strain ATCC BAA-1232 / LMG 22953 / PM1), this protein is DNA ligase.